A 171-amino-acid polypeptide reads, in one-letter code: Nicotinamide-nucleotide adenylyltransferase (171 aa).

The protein belongs to the archaeal NMN adenylyltransferase family.

It is found in the cytoplasm. It catalyses the reaction beta-nicotinamide D-ribonucleotide + ATP + H(+) = diphosphate + NAD(+). It participates in cofactor biosynthesis; NAD(+) biosynthesis; NAD(+) from nicotinamide D-ribonucleotide: step 1/1. This Methanococcus maripaludis (strain DSM 14266 / JCM 13030 / NBRC 101832 / S2 / LL) protein is Nicotinamide-nucleotide adenylyltransferase.